The primary structure comprises 211 residues: Protein-L-isoaspartate O-methyltransferase (211 aa).

Ser-60 is a catalytic residue.

The protein belongs to the methyltransferase superfamily. L-isoaspartyl/D-aspartyl protein methyltransferase family.

The protein localises to the cytoplasm. It catalyses the reaction [protein]-L-isoaspartate + S-adenosyl-L-methionine = [protein]-L-isoaspartate alpha-methyl ester + S-adenosyl-L-homocysteine. Its function is as follows. Catalyzes the methyl esterification of L-isoaspartyl residues in peptides and proteins that result from spontaneous decomposition of normal L-aspartyl and L-asparaginyl residues. It plays a role in the repair and/or degradation of damaged proteins. The polypeptide is Protein-L-isoaspartate O-methyltransferase (Ectopseudomonas mendocina (strain ymp) (Pseudomonas mendocina)).